Reading from the N-terminus, the 1505-residue chain is Anaphase-promoting complex subunit 1 (1505 aa).

This sequence belongs to the APC1 family. The APC/C complex is probably composed of at least 12 subunits: apc-2, apc-10, apc-11, cdc-26, emb-1, emb-27, emb-30, mat-1, mat-2, mat-3, such-1 and gfi-3.

Its pathway is protein modification; protein ubiquitination. In terms of biological role, probable component of the anaphase promoting complex/cyclosome (APC/C), a cell cycle-regulated E3 ubiquitin ligase that controls progression through mitosis and the G1 phase of the cell cycle. The APC/C complex acts by mediating ubiquitination and subsequent degradation of target proteins. Developmental role in early embryogenesis and the metaphase to anaphase transition in oocyte and spermatocyte meiosis and mitosis in germ cells. Required for embryonic anterior-posterior axis formation. Plays a role in regulating the abundance of glr-1 receptors in postmitotic neurons, which may in turn control animal locomotion. Involved in regulating GABA neurotransmitter release at neuromuscular junctions in GABA motor neurons. This Caenorhabditis elegans protein is Anaphase-promoting complex subunit 1.